A 394-amino-acid polypeptide reads, in one-letter code: tRNA-specific 2-thiouridylase MnmA (394 aa).

Residues 13-20 and methionine 39 each bind ATP; that span reads GLSGGVDS. An interaction with target base in tRNA region spans residues 99–101; sequence NPD. Cysteine 104 serves as the catalytic Nucleophile. A disulfide bridge links cysteine 104 with cysteine 202. Glycine 128 lines the ATP pocket. The segment at 152–154 is interaction with tRNA; the sequence is KDQ. Cysteine 202 acts as the Cysteine persulfide intermediate in catalysis. Residues 329 to 330 form an interaction with tRNA region; that stretch reads RY.

The protein belongs to the MnmA/TRMU family.

The protein localises to the cytoplasm. It catalyses the reaction S-sulfanyl-L-cysteinyl-[protein] + uridine(34) in tRNA + AH2 + ATP = 2-thiouridine(34) in tRNA + L-cysteinyl-[protein] + A + AMP + diphosphate + H(+). Functionally, catalyzes the 2-thiolation of uridine at the wobble position (U34) of tRNA, leading to the formation of s(2)U34. The protein is tRNA-specific 2-thiouridylase MnmA of Polaromonas naphthalenivorans (strain CJ2).